The primary structure comprises 148 residues: Snaclec 3 (148 aa).

An N-terminal signal peptide occupies residues 1–23 (WGDSSSSASACWSCSSPLSGTEA). Disulfide bonds link cysteine 27-cysteine 38, cysteine 55-cysteine 144, and cysteine 121-cysteine 136. Residues 34-145 (YDQNCYKAFE…CSGTHSFVCK (112 aa)) form the C-type lectin domain.

It belongs to the snaclec family. As to quaternary structure, heterodimer; disulfide-linked. In terms of tissue distribution, expressed by the venom gland.

Its subcellular location is the secreted. Interferes with one step of hemostasis (modulation of platelet aggregation, or coagulation cascade, for example). This is Snaclec 3 from Echis carinatus sochureki (Saw-scaled viper).